Here is a 156-residue protein sequence, read N- to C-terminus: Transcription antitermination protein NusB (156 aa).

It belongs to the NusB family.

Its function is as follows. Involved in transcription antitermination. Required for transcription of ribosomal RNA (rRNA) genes. Binds specifically to the boxA antiterminator sequence of the ribosomal RNA (rrn) operons. The chain is Transcription antitermination protein NusB from Xanthomonas oryzae pv. oryzae (strain MAFF 311018).